Reading from the N-terminus, the 100-residue chain is uncharacterized protein (100 aa).

The HTH arsR-type domain maps to 1 to 100; that stretch reads MEPIEVFKAL…KLADFLKTEI (100 aa). Positions 44-67 form a DNA-binding region, H-T-H motif; it reads VSQITDKLKMTQSTASQYLTILLR.

This is an uncharacterized protein from Bacillus subtilis (strain 168).